Consider the following 1767-residue polypeptide: Trans-Golgi network-localized SYP41-interacting protein 1 (1767 aa).

The tract at residues 1-72 (MHEKDDLPQD…LTTDDDDNDD (72 aa)) is disordered. At 1–1748 (MHEKDDLPQD…RVLMSRPQAR (1748 aa)) the chain is on the cytoplasmic side. Residues 16-32 (IENDDESNGQEEEELDP) show a composition bias toward acidic residues. Coiled-coil stretches lie at residues 276–436 (LSHL…MSTA), 493–516 (VRSLAEERKELTNVSQEYNRLKDL), 570–590 (KSNIRKELDDLSFSLKKMEET), 684–805 (VSNL…LQQS), and 845–1082 (IQEV…LSSK). Positions 1177-1190 (DNSVNTEPENSQGS) are enriched in polar residues. The segment at 1177–1198 (DNSVNTEPENSQGSAADEDEIS) is disordered. 4 coiled-coil regions span residues 1251-1310 (NSSL…FQEN), 1362-1424 (IRDM…WHEK), 1522-1542 (LKKATEAESTTELELVKAKNE), and 1603-1630 (LAGSEKLVDKLSLRVKEFEEKLQTKAIQ). The chain crosses the membrane as a helical; Anchor for type IV membrane protein span at residues 1749–1766 (LGVMVYSLLLHLWLLASI). Position 1767 (L1767) is a topological domain, vesicular.

Interacts with SYP41. As to expression, expressed ubiquitously in roots, leaves and flowers, and, to a lower extent, in stems.

Its subcellular location is the golgi apparatus. It is found in the trans-Golgi network membrane. Its function is as follows. Tethering factor involved in vesicle fusion at the trans-Golgi network (TGN) thus being required for efficient protein trafficking to the vacuole. Implicated in resistance to salt and osmotic stresses. Modulates the cell morphology (e.g. epidermal cell file rotation (CFR) and cell expansion) in mature regions of roots and the base of hypocotyls as well as root skewing, a process leading to root movement within the soil in order to maximize anchorage and nutrient acquisition, probably by regulating microtubule stabilization independently of their orientation. The polypeptide is Trans-Golgi network-localized SYP41-interacting protein 1 (Arabidopsis thaliana (Mouse-ear cress)).